We begin with the raw amino-acid sequence, 766 residues long: Protein zer-1 homolog (766 aa).

N-acetylalanine is present on Ala2. 3 LRR repeats span residues 226–245 (SLVL…IVQL), 246–268 (HKLR…KLTR), and 278–302 (LGNL…KMEE). 5 ARM repeats span residues 427–467 (RSEQ…NFGI), 511–556 (DNDH…NITD), 558–600 (TPDN…NVAE), 602–643 (KELR…HIMF), and 714–756 (PDKY…HCSN).

It belongs to the zyg-11 family. Interacts with the ELOC-ELOB/Elongin BC complex. Part of an E3 ubiquitin ligase complex including ZER1, CUL2 and Elongin BC.

Serves as substrate adapter subunit in the E3 ubiquitin ligase complex ZYG11B-CUL2-Elongin BC. Acts redudantly with ZYG11B to target substrates bearing N-terminal glycine degrons for proteasomal degradation. Involved in the clearance of proteolytic fragments generated by caspase cleavage during apoptosis since N-terminal glycine degrons are strongly enriched at caspase cleavage sites. Also important in the quality control of protein N-myristoylation in which N-terminal glycine degrons are conditionally exposed after a failure of N-myristoylation. This chain is Protein zer-1 homolog (ZER1), found in Pongo abelii (Sumatran orangutan).